The chain runs to 273 residues: Rhamnulose-1-phosphate aldolase (273 aa).

E117 is an active-site residue. Zn(2+)-binding residues include H140, H142, and H211.

It belongs to the aldolase class II family. RhaD subfamily. It depends on Zn(2+) as a cofactor.

It is found in the cytoplasm. It catalyses the reaction L-rhamnulose 1-phosphate = (S)-lactaldehyde + dihydroxyacetone phosphate. Its pathway is carbohydrate degradation; L-rhamnose degradation; glycerone phosphate from L-rhamnose: step 3/3. Catalyzes the reversible cleavage of L-rhamnulose-1-phosphate to dihydroxyacetone phosphate (DHAP) and L-lactaldehyde. The sequence is that of Rhamnulose-1-phosphate aldolase from Listeria monocytogenes serovar 1/2a (strain ATCC BAA-679 / EGD-e).